The sequence spans 619 residues: MSSFGKNSSYRDTGASLKELGDYLDSKQEGKPTHQKTIGFDTNTSPVSIPTIISPPLGSNNSNYGKSPKSSYDNKQTSPLLSASNNRKNNNNNNNNNNATSPKDSSIIGKNNVNSDLSKVSSSLNELKFEKQPIGSTSSTPTSTPSSTPSSSTPSSTPSTPNTNSQQQQQQQQQQKKQQQQQPKQPQQPKQQSKQQATQQDKKDKEQQQQQQDKQDKESNEIKGSKEVAKDGQHGVKQFDDPKQRGKITKKKIIKVGESSRSVQLFNHLPQYNSEFSMGVSVSTDEPNEKYPIHPDIISLGLKYAEFKIAGSNARAIAMMTAFIQIFKDYVAAPDKVYSRELDSLLKRNIQFLVDCRPISISMGNSINYVKHKLSLTNNMSHEGARDYLIKSINEFIERIQMADNAIVKHGCSKINDGDVILTYASSHVVELIIQQAIQDKKKFRLIIVDSRPKHEGRELLHRLVLHGVKITYIMLHAVSYIMKEVTKVFVGAYSVLSNGNLISRSGTSLVASMAKFYNVPFIVCCETYKFTERVQLDSICFNQIGNPQDLVQNLGEKEGSKSLLENWESYSTLKLLNLMYDLTPIELIDMVITEFGMLPPTSIPVVLREYRKEVISIN.

Positions 21–32 are enriched in basic and acidic residues; it reads GDYLDSKQEGKP. The interval 21 to 251 is disordered; sequence GDYLDSKQEG…PKQRGKITKK (231 aa). Over residues 42–56 the composition is skewed to low complexity; the sequence is TNTSPVSIPTIISPP. The span at 57 to 84 shows a compositional bias: polar residues; the sequence is LGSNNSNYGKSPKSSYDNKQTSPLLSAS. Over residues 85-98 the composition is skewed to low complexity; sequence NNRKNNNNNNNNNN. The segment covering 99-125 has biased composition (polar residues); that stretch reads ATSPKDSSIIGKNNVNSDLSKVSSSLN. The span at 136 to 199 shows a compositional bias: low complexity; sequence STSSTPTSTP…KQQSKQQATQ (64 aa). The segment covering 200 to 244 has biased composition (basic and acidic residues); the sequence is QDKKDKEQQQQQQDKQDKESNEIKGSKEVAKDGQHGVKQFDDPKQ.

It belongs to the eIF-2B alpha/beta/delta subunits family. In terms of assembly, component of the translation initiation factor 2B (eIF2B) complex which is a heterodecamer of two sets of five different subunits: alpha, beta, gamma, delta and epsilon. Subunits alpha, beta and delta comprise a regulatory subcomplex and subunits epsilon and gamma comprise a catalytic subcomplex. Within the complex, the hexameric regulatory complex resides at the center, with the two heterodimeric catalytic subcomplexes bound on opposite sides.

It localises to the cytoplasm. The protein resides in the cytosol. Its function is as follows. Acts as a component of the translation initiation factor 2B (eIF2B) complex, which catalyzes the exchange of GDP for GTP on eukaryotic initiation factor 2 (eIF2) gamma subunit. Its guanine nucleotide exchange factor activity is repressed when bound to eIF2 complex phosphorylated on the alpha subunit, thereby limiting the amount of methionyl-initiator methionine tRNA available to the ribosome and consequently global translation is repressed. This is Translation initiation factor eIF2B subunit delta (eif2b4) from Dictyostelium discoideum (Social amoeba).